Consider the following 302-residue polypeptide: GTP cyclohydrolase FolE2 (302 aa).

The protein belongs to the GTP cyclohydrolase IV family.

The catalysed reaction is GTP + H2O = 7,8-dihydroneopterin 3'-triphosphate + formate + H(+). Its pathway is cofactor biosynthesis; 7,8-dihydroneopterin triphosphate biosynthesis; 7,8-dihydroneopterin triphosphate from GTP: step 1/1. In terms of biological role, converts GTP to 7,8-dihydroneopterin triphosphate. The protein is GTP cyclohydrolase FolE2 of Pseudoalteromonas translucida (strain TAC 125).